Consider the following 179-residue polypeptide: Apoptosis regulator Bcl-2 homolog (179 aa).

A BH1 motif is present at residues 76–95 (ELFKDLINWGRICGFIVFSA). The short motif at 126–141 (PWMISHGGQEEFLAFS) is the BH2 element.

Belongs to the Bcl-2 family. In terms of assembly, interacts with host BECN1 (via BH3 homology domain); this interaction allows the virus to inhibit BECN1, and thus autophagy. Interacts with host BID. Interacts with host BAX.

The protein localises to the host mitochondrion. It localises to the host endoplasmic reticulum. Its function is as follows. Suppresses apoptosis in host cell to promote the viral replication. Has the ability to potentially bind to all the members of the proapoptotic Bcl-2 family. Inhibits autophagy by interacting with host Beclin 1 (BECN1). The polypeptide is Apoptosis regulator Bcl-2 homolog (Ornithodoros (relapsing fever ticks)).